The following is a 141-amino-acid chain: Lysozyme P (141 aa).

The signal sequence occupies residues 1-18; sequence MKAFLVICALTLTAVATQ. Residues 20–141 enclose the C-type lysozyme domain; it reads RTMDRCSLAR…GSLPSINSCF (122 aa). 4 disulfide bridges follow: Cys-25-Cys-140, Cys-46-Cys-130, Cys-81-Cys-97, and Cys-93-Cys-111. Residues Glu-51 and Asp-69 contribute to the active site.

This sequence belongs to the glycosyl hydrolase 22 family. As to expression, salivary gland.

It catalyses the reaction Hydrolysis of (1-&gt;4)-beta-linkages between N-acetylmuramic acid and N-acetyl-D-glucosamine residues in a peptidoglycan and between N-acetyl-D-glucosamine residues in chitodextrins.. Unlikely to play an active role in the humoral immune defense. May have a function in the digestion of bacteria in the food. The polypeptide is Lysozyme P (LysP) (Drosophila melanogaster (Fruit fly)).